Reading from the N-terminus, the 547-residue chain is MGTPRGLRNAGSSSSACRFLAAFAVLLALPTLTAGLTRHYTFNVQMTNVTRLCVTKSIPTVNGQFPGPKLVVREGDRLVVKVHNHMNYNVSFHWHGILQLRNGWADGPSYITQCPIQGGGSYVYDFTVTGQRGTLWWHAHFSWLRVHLYGPLVILPKRGEGFPFPRPYKELPPIMFGEWFNADTEAVINQALQTGAGPNISDAYTFNGLPGPTYNCSSKDTYKVKVQPGRTYLLRLINSALNDELFFGIANHTLTVVEADANYVKPFTAKTLVISPGQTMNLLLTTAPNPGSPVYAMAIAPYTNTQGTFDNTTAVAVLEYAPTRASATGNNNLPLPPLPRYNDTNAVANFSSKFRSLATARYPARVPRAVDRHVLFTVGLGTDPCPSNQTCQGPNGTKFAASINNNSFVRPRVALLEAHCQRRVVPLAFNTSVELVLQGTSIQGAESHPLHMHGFNFFVVGQGFGNYDPVNDPANYNLVDPVERNTVSVPTGGWVAVRFLADNPGVWLMHCHFDVHLSWGLSMAWLVNDGPLPSQKMLPPPSDLPKC.

Residues 1–35 form the signal peptide; the sequence is MGTPRGLRNAGSSSSACRFLAAFAVLLALPTLTAG. Plastocyanin-like domains follow at residues 43 to 159 and 170 to 323; these read NVQM…PKRG and ELPP…YAPT. Residues asparagine 48 and asparagine 89 are each glycosylated (N-linked (GlcNAc...) asparagine). Cu cation contacts are provided by histidine 93, histidine 95, histidine 138, and histidine 140. 10 N-linked (GlcNAc...) asparagine glycosylation sites follow: asparagine 199, asparagine 215, asparagine 251, asparagine 311, asparagine 342, asparagine 349, asparagine 388, asparagine 395, asparagine 405, and asparagine 430. In terms of domain architecture, Plastocyanin-like 3 spans 408–531; the sequence is FVRPRVALLE…SMAWLVNDGP (124 aa). Cu cation contacts are provided by histidine 448, histidine 451, histidine 453, histidine 510, cysteine 511, histidine 512, and histidine 516.

It belongs to the multicopper oxidase family. Requires Cu cation as cofactor.

Its subcellular location is the secreted. It localises to the extracellular space. It is found in the apoplast. The enzyme catalyses 4 hydroquinone + O2 = 4 benzosemiquinone + 2 H2O. Functionally, lignin degradation and detoxification of lignin-derived products. This is Putative laccase-5 (LAC5) from Oryza sativa subsp. japonica (Rice).